We begin with the raw amino-acid sequence, 348 residues long: Serpentine receptor class beta-7 (348 aa).

A run of 7 helical transmembrane segments spans residues 31-51 (QLIM…FQLL), 63-83 (LVGY…EAFI), 107-127 (GNLL…SITF), 145-165 (FLGP…ILLI), 191-211 (MFFI…FLLL), 241-261 (ISVI…TILL), and 280-300 (GAFM…SVYF).

It belongs to the nematode receptor-like protein srb family.

Its subcellular location is the membrane. This Caenorhabditis elegans protein is Serpentine receptor class beta-7 (srb-7).